A 480-amino-acid chain; its full sequence is RNA-splicing ligase RtcB homolog (480 aa).

Asp-93, Cys-96, His-202, His-234, and His-328 together coordinate Mn(2+). 201–205 is a binding site for GMP; the sequence is NHYTE. Residues 328–329, 377–380, Ser-384, 403–406, and Lys-479 each bind GMP; these read HN, GGTM, and HGAG. His-403 functions as the GMP-histidine intermediate in the catalytic mechanism.

It belongs to the RtcB family. In terms of assembly, catalytic component of the tRNA-splicing ligase complex. Mn(2+) is required as a cofactor.

The enzyme catalyses a 3'-end 3'-phospho-ribonucleotide-RNA + a 5'-end dephospho-ribonucleoside-RNA + GTP = a ribonucleotidyl-ribonucleotide-RNA + GMP + diphosphate. The catalysed reaction is a 3'-end 2',3'-cyclophospho-ribonucleotide-RNA + a 5'-end dephospho-ribonucleoside-RNA + GTP + H2O = a ribonucleotidyl-ribonucleotide-RNA + GMP + diphosphate + H(+). Functionally, catalytic subunit of the tRNA-splicing ligase complex that acts by directly joining spliced tRNA halves to mature-sized tRNAs by incorporating the precursor-derived splice junction phosphate into the mature tRNA as a canonical 3',5'-phosphodiester. May act as an RNA ligase with broad substrate specificity, and may function toward other RNAs. This Thalassiosira pseudonana (Marine diatom) protein is RNA-splicing ligase RtcB homolog.